Here is a 719-residue protein sequence, read N- to C-terminus: Histone-lysine N-methyltransferase SETDB2 (719 aa).

Residues 72–82 (SQKEVNAQSSD) show a composition bias toward polar residues. The disordered stretch occupies residues 72-102 (SQKEVNAQSSDPMPVTQKEQENKSNAFPSTS). The region spanning 157-229 (LNLKGENPLQ…DNFSFNTYVQ (73 aa)) is the MBD domain. The Pre-SET domain occupies 291–364 (DSCDCSEGCI…LCQNRVVQHG (74 aa)). Residues C293, C295, C299, C305, C307, C345, C349, C351, and C356 each contribute to the Zn(2+) site. In terms of domain architecture, SET spans 367 to 694 (VRLQVFKTEQ…ARTELTWDYG (328 aa)). S-adenosyl-L-methionine contacts are provided by residues 377 to 379 (KGW) and D418. A disordered region spans residues 508–547 (FVSSESVTPEDNDGFKPPREHLNSKTKGAQKDSSSNHVDE). The segment covering 520–530 (DGFKPPREHLN) has biased composition (basic and acidic residues). Residues 532–543 (KTKGAQKDSSSN) are compositionally biased toward polar residues. S-adenosyl-L-methionine is bound by residues R648 and 651 to 652 (NH). Zn(2+)-binding residues include C654, C707, C709, and C714.

Belongs to the class V-like SAM-binding methyltransferase superfamily. Ubiquitous. Highest expression in heart, testis and ovary.

Its subcellular location is the nucleus. It localises to the chromosome. The enzyme catalyses N(6),N(6)-dimethyl-L-lysyl(9)-[histone H3] + S-adenosyl-L-methionine = N(6),N(6),N(6)-trimethyl-L-lysyl(9)-[histone H3] + S-adenosyl-L-homocysteine + H(+). Histone methyltransferase involved in left-right axis specification in early development and mitosis. Specifically trimethylates 'Lys-9' of histone H3 (H3K9me3). H3K9me3 is a specific tag for epigenetic transcriptional repression that recruits HP1 (CBX1, CBX3 and/or CBX5) proteins to methylated histones. Contributes to H3K9me3 in both the interspersed repetitive elements and centromere-associated repeats. Plays a role in chromosome condensation and segregation during mitosis. The sequence is that of Histone-lysine N-methyltransferase SETDB2 (SETDB2) from Homo sapiens (Human).